A 948-amino-acid chain; its full sequence is Translation initiation factor IF-2 (948 aa).

Disordered regions lie at residues 61–120 (IQAN…PALI), 162–243 (KSRE…TQSA), and 255–285 (QEKD…SHKI). Residues 68–78 (KNPEQDNKDDL) are compositionally biased toward basic and acidic residues. Positions 173–189 (SNTNNANSTNNANNVNN) are enriched in low complexity. The span at 190–207 (AKKEISEVKKQEQEIKRH) shows a compositional bias: basic and acidic residues. Over residues 208–219 (ENIKRRTGFRVI) the composition is skewed to basic residues. Positions 230 to 243 (ENSVAESKKPTQSA) are enriched in polar residues. In terms of domain architecture, tr-type G spans 447-616 (ERPPVVTIMG…LIQADIMELK (170 aa)). The G1 stretch occupies residues 456–463 (GHVDHGKT). 456-463 (GHVDHGKT) is a binding site for GTP. The tract at residues 481–485 (GITQH) is G2. The tract at residues 502–505 (DTPG) is G3. GTP-binding positions include 502–506 (DTPGH) and 556–559 (NKMD). The tract at residues 556 to 559 (NKMD) is G4. Positions 592–594 (SAK) are G5.

It belongs to the TRAFAC class translation factor GTPase superfamily. Classic translation factor GTPase family. IF-2 subfamily.

It localises to the cytoplasm. In terms of biological role, one of the essential components for the initiation of protein synthesis. Protects formylmethionyl-tRNA from spontaneous hydrolysis and promotes its binding to the 30S ribosomal subunits. Also involved in the hydrolysis of GTP during the formation of the 70S ribosomal complex. The polypeptide is Translation initiation factor IF-2 (Helicobacter pylori (strain Shi470)).